The following is a 228-amino-acid chain: Cytidylate kinase (228 aa).

Position 17–25 (17–25) interacts with ATP; that stretch reads GPTASGKGT.

It belongs to the cytidylate kinase family. Type 1 subfamily.

Its subcellular location is the cytoplasm. It carries out the reaction CMP + ATP = CDP + ADP. The enzyme catalyses dCMP + ATP = dCDP + ADP. The polypeptide is Cytidylate kinase (Burkholderia mallei (strain NCTC 10247)).